Reading from the N-terminus, the 412-residue chain is DNA polymerase IV (412 aa).

In terms of domain architecture, UmuC spans 12–193 (ILHVDMNCFF…LPVGAMHGIG (182 aa)). Mg(2+)-binding residues include Asp-16 and Asp-112. Glu-113 is a catalytic residue. The interval 235–257 (KGMDDREVDPSQMGQHKSVGNSM) is disordered. Over residues 246–257 (QMGQHKSVGNSM) the composition is skewed to polar residues.

This sequence belongs to the DNA polymerase type-Y family. In terms of assembly, monomer. Requires Mg(2+) as cofactor.

The protein resides in the cytoplasm. It catalyses the reaction DNA(n) + a 2'-deoxyribonucleoside 5'-triphosphate = DNA(n+1) + diphosphate. Its function is as follows. Poorly processive, error-prone DNA polymerase involved in untargeted mutagenesis. Copies undamaged DNA at stalled replication forks, which arise in vivo from mismatched or misaligned primer ends. These misaligned primers can be extended by PolIV. Exhibits no 3'-5' exonuclease (proofreading) activity. May be involved in translesional synthesis, in conjunction with the beta clamp from PolIII. The sequence is that of DNA polymerase IV from Bacillus anthracis.